The sequence spans 513 residues: 2-isopropylmalate synthase (513 aa).

Residues Ile4–Ala266 form the Pyruvate carboxyltransferase domain. Asp13, His201, His203, and Asn237 together coordinate Mn(2+). The tract at residues Ile390–Ile513 is regulatory domain.

It belongs to the alpha-IPM synthase/homocitrate synthase family. LeuA type 1 subfamily. As to quaternary structure, homodimer. The cofactor is Mn(2+).

The protein localises to the cytoplasm. It carries out the reaction 3-methyl-2-oxobutanoate + acetyl-CoA + H2O = (2S)-2-isopropylmalate + CoA + H(+). It participates in amino-acid biosynthesis; L-leucine biosynthesis; L-leucine from 3-methyl-2-oxobutanoate: step 1/4. Its function is as follows. Catalyzes the condensation of the acetyl group of acetyl-CoA with 3-methyl-2-oxobutanoate (2-ketoisovalerate) to form 3-carboxy-3-hydroxy-4-methylpentanoate (2-isopropylmalate). This chain is 2-isopropylmalate synthase, found in Lactococcus lactis subsp. lactis (strain IL1403) (Streptococcus lactis).